The primary structure comprises 282 residues: Putative phosphatase MPN_383 (282 aa).

D11 (nucleophile) is an active-site residue. D11 lines the Mg(2+) pocket. Residue L12 coordinates phosphate. D13 lines the Mg(2+) pocket. Phosphate-binding positions include T45–G46 and K207. Residue D230 coordinates Mg(2+). N233 is a phosphate binding site.

It belongs to the HAD-like hydrolase superfamily. Cof family. Mg(2+) serves as cofactor.

This chain is Putative phosphatase MPN_383, found in Mycoplasma pneumoniae (strain ATCC 29342 / M129 / Subtype 1) (Mycoplasmoides pneumoniae).